The primary structure comprises 25 residues: Retinol-binding protein 3 (25 aa).

The protein resides in the secreted. Its subcellular location is the extracellular space. The protein localises to the extracellular matrix. It localises to the interphotoreceptor matrix. In terms of biological role, IRBP shuttles 11-cis and all trans retinoids between the retinol isomerase in the pigment epithelium and the visual pigments in the photoreceptor cells of the retina. This chain is Retinol-binding protein 3 (RBP3), found in Sus scrofa (Pig).